Here is a 512-residue protein sequence, read N- to C-terminus: ATP synthase subunit alpha (512 aa).

169 to 176 (GDRQTGKT) contacts ATP.

Belongs to the ATPase alpha/beta chains family. In terms of assembly, F-type ATPases have 2 components, CF(1) - the catalytic core - and CF(0) - the membrane proton channel. CF(1) has five subunits: alpha(3), beta(3), gamma(1), delta(1), epsilon(1). CF(0) has three main subunits: a(1), b(2) and c(9-12). The alpha and beta chains form an alternating ring which encloses part of the gamma chain. CF(1) is attached to CF(0) by a central stalk formed by the gamma and epsilon chains, while a peripheral stalk is formed by the delta and b chains.

The protein resides in the cell membrane. The catalysed reaction is ATP + H2O + 4 H(+)(in) = ADP + phosphate + 5 H(+)(out). Produces ATP from ADP in the presence of a proton gradient across the membrane. The alpha chain is a regulatory subunit. The chain is ATP synthase subunit alpha from Elusimicrobium minutum (strain Pei191).